The sequence spans 505 residues: Maturase K (505 aa).

It belongs to the intron maturase 2 family. MatK subfamily.

It is found in the plastid. It localises to the chloroplast. In terms of biological role, usually encoded in the trnK tRNA gene intron. Probably assists in splicing its own and other chloroplast group II introns. This is Maturase K from Barclaya longifolia (Orchid lily).